The primary structure comprises 356 residues: 3-dehydroquinate synthase (356 aa).

Residues 71–76 (EGEASK), 105–109 (GVTGD), 129–130 (TS), K142, and K151 contribute to the NAD(+) site. 3 residues coordinate Zn(2+): E184, H247, and H264.

It belongs to the sugar phosphate cyclases superfamily. Dehydroquinate synthase family. Co(2+) is required as a cofactor. Requires Zn(2+) as cofactor. The cofactor is NAD(+).

It is found in the cytoplasm. It catalyses the reaction 7-phospho-2-dehydro-3-deoxy-D-arabino-heptonate = 3-dehydroquinate + phosphate. It functions in the pathway metabolic intermediate biosynthesis; chorismate biosynthesis; chorismate from D-erythrose 4-phosphate and phosphoenolpyruvate: step 2/7. Catalyzes the conversion of 3-deoxy-D-arabino-heptulosonate 7-phosphate (DAHP) to dehydroquinate (DHQ). This is 3-dehydroquinate synthase from Lactococcus lactis subsp. cremoris (strain SK11).